The following is a 293-amino-acid chain: MVITVPATSANLGPGFDTLGLALNLRNEIEIVKSDYTSIEIYGENAEYLRTLKRNYFVEIFMDHYKNLTGKEDSFKFKFNNKIPLSRGLGSSSAVIIAAITAAYEMAQVPYKKDRIINLALSYEPHPDNITPAALGGFCVAKLRKNRVYFLKKFIPTYLRAVVVIPNRTISTQKSRNALKAHYNLKDIVTNISSASMITAAFFSEKFEILRNVVEDKIHQENRMKAVPELFKVREIALREGALMSTLSGSGSTFFNLAYKDDAYSIYNVLRDNFKDFTIKILQFDNVGVKVYN.

84 to 94 (PLSRGLGSSSA) is a binding site for ATP.

Belongs to the GHMP kinase family. Homoserine kinase subfamily.

It localises to the cytoplasm. It carries out the reaction L-homoserine + ATP = O-phospho-L-homoserine + ADP + H(+). It participates in amino-acid biosynthesis; L-threonine biosynthesis; L-threonine from L-aspartate: step 4/5. In terms of biological role, catalyzes the ATP-dependent phosphorylation of L-homoserine to L-homoserine phosphate. The protein is Homoserine kinase of Nautilia profundicola (strain ATCC BAA-1463 / DSM 18972 / AmH).